Consider the following 448-residue polypeptide: ATP-dependent protease ATPase subunit HslU (448 aa).

Residues isoleucine 23, 65-70 (GIGKTE), aspartate 263, glutamate 327, and arginine 399 contribute to the ATP site.

This sequence belongs to the ClpX chaperone family. HslU subfamily. In terms of assembly, a double ring-shaped homohexamer of HslV is capped on each side by a ring-shaped HslU homohexamer. The assembly of the HslU/HslV complex is dependent on binding of ATP.

Its subcellular location is the cytoplasm. Its function is as follows. ATPase subunit of a proteasome-like degradation complex; this subunit has chaperone activity. The binding of ATP and its subsequent hydrolysis by HslU are essential for unfolding of protein substrates subsequently hydrolyzed by HslV. HslU recognizes the N-terminal part of its protein substrates and unfolds these before they are guided to HslV for hydrolysis. The sequence is that of ATP-dependent protease ATPase subunit HslU from Borreliella burgdorferi (strain ATCC 35210 / DSM 4680 / CIP 102532 / B31) (Borrelia burgdorferi).